Here is a 286-residue protein sequence, read N- to C-terminus: 2-hydroxy-6-oxo-6-phenylhexa-2,4-dienoate hydrolase (286 aa).

An AB hydrolase-1 domain is found at Val-36 to His-271. Substrate contacts are provided by residues Gly-42–Gly-43, Asn-51, Asn-111, Ser-180, and Arg-190. His-265 functions as the Proton acceptor in the catalytic mechanism. Trp-266 lines the substrate pocket.

The protein belongs to the AB hydrolase superfamily. BphD family. Homodimer.

The catalysed reaction is 2,6-dioxo-6-phenylhexa-3-enoate + H2O = 2-oxopent-4-enoate + benzoate + H(+). The protein operates within xenobiotic degradation; biphenyl degradation; 2-hydroxy-2,4-pentadienoate and benzoate from biphenyl: step 4/4. Catalyzes an unusual C-C bond hydrolysis of 2-hydroxy-6-oxo-6-phenylhexa-2,4-dienoic acid (HOPDA) to produce benzoic acid and 2-hydroxy-2,4-pentadienoic acid (HPD). The polypeptide is 2-hydroxy-6-oxo-6-phenylhexa-2,4-dienoate hydrolase (Burkholderia cepacia (Pseudomonas cepacia)).